A 462-amino-acid chain; its full sequence is HEPACAM family member 2 (462 aa).

Positions 1-31 are cleaved as a signal peptide; the sequence is MGQDAFMEPFGDTLGVFQCKIYLLLFGACSG. 3 N-linked (GlcNAc...) asparagine glycosylation sites follow: N85, N129, and N165. 2 consecutive Ig-like C2-type domains span residues 149–233 and 235–331; these read PVVQ…SDII and PIIY…THFT. Disulfide bonds link C170–C219 and C270–C315. N-linked (GlcNAc...) asparagine glycosylation occurs at N320. The chain crosses the membrane as a helical span at residues 352–372; that stretch reads LASITGISLFLIISMCLLFLW. At 373–462 the chain is on the cytoplasmic side; the sequence is KKYQPYKVIK…IPAQQQDHPE (90 aa).

In terms of processing, poly-ADP-ribosylated (PARsylated) by tankyrase TNKS during late G2 and prophase, leading to translocation to mitotic centrosomes. N-glycosylated. As to expression, widely expressed.

The protein localises to the golgi apparatus membrane. The protein resides in the cytoplasm. It is found in the cytoskeleton. It localises to the spindle. Its subcellular location is the microtubule organizing center. The protein localises to the centrosome. The protein resides in the midbody. Its function is as follows. Required during prometaphase for centrosome maturation. Following poly-ADP-ribosylation (PARsylation) by TNKS, translocates from the Golgi apparatus to mitotic centrosomes and plays a key role in the formation of robust microtubules for prompt movement of chromosomes: anchors AKAP9/CG-NAP, a scaffold protein of the gamma-tubulin ring complex and promotes centrosome maturation. The protein is HEPACAM family member 2 (HEPACAM2) of Homo sapiens (Human).